A 333-amino-acid polypeptide reads, in one-letter code: MWSCEDLNYTNSGEEQYLCNEFHLFLFIFSVLYLIICFPVGLCYNVQLVLVNLYNKATMTMPDVYFVNMAIAGLIINAVAPVYLFGPAYTKWSLWSFGNEVYITLLILFNVSSLVIMYSTTLLSLDYYIECALPRTYMSSVYNTKHVCGFIWGGAVLTSFSSLLFYICNHVSTKIIECSKMQNREAADAIMVLIGYVVPIIAVIYALVLILQIRKEATPLDQESGRLDPSVHRLLIATVCTQFILWTPYYVTLLVNTFMDARVKSSNTFYIRIFQFTEGLSNFLAFSSSFVLPLIHRHINKNFSGKLQRLLKRLHCGSQGCTHEHTVVQQVMT.

Over M1–E21 the chain is Extracellular. An N-linked (GlcNAc...) asparagine glycan is attached at N8. A helical transmembrane segment spans residues F22–L42. Residues C43–Y65 lie on the Cytoplasmic side of the membrane. The chain crosses the membrane as a helical span at residues F66–G86. The Extracellular portion of the chain corresponds to P87–Y102. The helical transmembrane segment at I103–L123 threads the bilayer. Residues S124–H146 are Cytoplasmic-facing. Residues V147–I167 traverse the membrane as a helical segment. The Extracellular segment spans residues C168–A189. A helical transmembrane segment spans residues I190–I210. The Cytoplasmic portion of the chain corresponds to L211 to L234. A helical transmembrane segment spans residues L235 to V255. Over N256–Q275 the chain is Extracellular. Residues F276 to H296 form a helical membrane-spanning segment. The Cytoplasmic portion of the chain corresponds to R297–T333.

Belongs to the G-protein coupled receptor 1 family.

It localises to the cell membrane. G-protein coupled receptor required for the regulation of plasma cholesterol levels. The sequence is that of G-protein coupled receptor 146 (gpr146) from Xenopus laevis (African clawed frog).